A 311-amino-acid polypeptide reads, in one-letter code: Malate dehydrogenase (311 aa).

Residues 10-15 and aspartate 35 contribute to the NAD(+) site; that span reads GAGRVG. Substrate-binding residues include arginine 84 and arginine 90. Residues asparagine 97 and 120–122 contribute to the NAD(+) site; that span reads VTN. Substrate is bound by residues asparagine 122 and arginine 153. Histidine 177 (proton acceptor) is an active-site residue.

It belongs to the LDH/MDH superfamily. MDH type 3 family.

It catalyses the reaction (S)-malate + NAD(+) = oxaloacetate + NADH + H(+). Its function is as follows. Catalyzes the reversible oxidation of malate to oxaloacetate. The polypeptide is Malate dehydrogenase (Nitrosococcus oceani (strain ATCC 19707 / BCRC 17464 / JCM 30415 / NCIMB 11848 / C-107)).